Consider the following 459-residue polypeptide: Magnesium transporter MRS2-11, chloroplastic (459 aa).

The transit peptide at 1–62 (MALTPIPSTF…EALKVLSRSK (62 aa)) directs the protein to the chloroplast. Residues 76–122 (GDYESLNVSDDDDGSDSNSSDGDNGGGRDDSKKIDSSSSSSSSDSTS) form a disordered region. Residues 101–110 (GGRDDSKKID) are compositionally biased toward basic and acidic residues. A compositionally biased stretch (low complexity) spans 111-122 (SSSSSSSSDSTS). A run of 2 helical transmembrane segments spans residues 397–417 (LLLQ…GIFG) and 430–450 (AFWL…FLMY). The Required for magnesium transport activity motif lies at 417–419 (GMN).

This sequence belongs to the CorA metal ion transporter (MIT) (TC 1.A.35.5) family. In terms of tissue distribution, expressed in the green part of the plant. Preferentially expressed in the spongy mesophyll cells and stomata of young leaves but also detected in cotyledons and at the base of the leaf petioles.

It localises to the plastid. It is found in the chloroplast membrane. Its function is as follows. High-affinity magnesium transporter that mediates the influx of magnesium in chloroplast. This Arabidopsis thaliana (Mouse-ear cress) protein is Magnesium transporter MRS2-11, chloroplastic (MRS2-11).